We begin with the raw amino-acid sequence, 535 residues long: Intercellular adhesion molecule 1 (535 aa).

Residues 1–27 (MALGAAPAAQLALLALLGTLLPGPGGA) form the signal peptide. The Extracellular portion of the chain corresponds to 28–480 (GISIHPSKAI…LNVLHGQNIL (453 aa)). The Ig-like C2-type 1 domain maps to 41–102 (GDSLTVNCSN…SNCHKEQTIA (62 aa)). A glycan (N-linked (GlcNAc...) asparagine) is linked at N47. 2 cysteine pairs are disulfide-bonded: C48–C91 and C52–C95. 2 N-linked (GlcNAc...) asparagine glycosylation sites follow: N105 and N131. Residues 127–193 (GEELNLSCLV…FSCRWELDLR (67 aa)) form the Ig-like C2-type 2 domain. A disulfide bridge links C134 with C186. Residues 151–153 (RGE) carry the Cell attachment site; atypical motif. N-linked (GlcNAc...) asparagine glycans are attached at residues N183, N202, N236, N262, N302, N341, N357, N366, N404, and N428. An Ig-like C2-type 3 domain is found at 230 to 295 (GSRWPVNCTL…LKCSVTLGEV (66 aa)). C237 and C288 are joined by a disulfide. Residues 323–376 (WTTVTVECVTRDGAVVKLNGTSAVPPGPRAQLKLNASASDHRSNFSCSAALEIA) enclose the Ig-like C2-type 4 domain. 4 cysteine pairs are disulfide-bonded: C330–C369, C401–C417, C417–C456, and C429–C456. Residues 410–463 (GSEQTLKCEAQGNPIPKLNCSRKGDGASLPIGDLRPVRREVAGTYLCRATSARG) enclose the Ig-like C2-type 5 domain. Residues 481-503 (DIVIPVVAVTLILGALGTAGYVY) traverse the membrane as a helical segment. Residues 504-535 (NYQRKIQKYELQKARKAQEEAALKLNAQSTPP) lie on the Cytoplasmic side of the membrane. Position 533 is a phosphothreonine (T533).

This sequence belongs to the immunoglobulin superfamily. ICAM family. Homodimer. Interacts with MUC1 and promotes cell aggregation in epithelial cells. Interacts with ARHGEF26/SGEF. Interacts (on T cell side) with CD81, CD247 and CD9 at immunological synapses between antigen-presenting cells and T cells. In terms of processing, monoubiquitinated, which is promoted by MARCH9 and leads to endocytosis.

Its subcellular location is the membrane. In terms of biological role, ICAM proteins are ligands for the leukocyte adhesion protein LFA-1 (integrin alpha-L/beta-2). During leukocyte trans-endothelial migration, ICAM1 engagement promotes the assembly of endothelial apical cups through ARHGEF26/SGEF and RHOG activation. This Bos taurus (Bovine) protein is Intercellular adhesion molecule 1 (ICAM1).